Consider the following 133-residue polypeptide: Profilin-3 (133 aa).

This sequence belongs to the profilin family. As to quaternary structure, occurs in many kinds of cells as a complex with monomeric actin in a 1:1 ratio.

The protein resides in the cytoplasm. It localises to the cytoskeleton. Its function is as follows. Binds to actin and affects the structure of the cytoskeleton. At high concentrations, profilin prevents the polymerization of actin, whereas it enhances it at low concentrations. By binding to PIP2, it inhibits the formation of IP3 and DG. The protein is Profilin-3 (PRO3) of Nicotiana tabacum (Common tobacco).